The following is a 315-amino-acid chain: Thioredoxin reductase (315 aa).

34-41 (EGMKVGGQ) is an FAD binding site. Cys134 and Cys137 are joined by a disulfide. 282–291 (DIRVKSLRQV) is an FAD binding site.

The protein belongs to the class-II pyridine nucleotide-disulfide oxidoreductase family. As to quaternary structure, homodimer. Requires FAD as cofactor.

It is found in the cytoplasm. The catalysed reaction is [thioredoxin]-dithiol + NADP(+) = [thioredoxin]-disulfide + NADPH + H(+). The protein is Thioredoxin reductase (trxB) of Peptoclostridium litorale (Clostridium litorale).